The chain runs to 510 residues: Nectin-4 (510 aa).

A signal peptide spans 1–31; the sequence is MPLSLGAEMWGPAAWLLLLLLLASFTGQRLA. Residues 32–144 enclose the Ig-like V-type domain; it reads GELETSDLVT…GSFQARLRLR (113 aa). At 32-349 the chain is on the extracellular side; sequence GELETSDLVT…GKQVDLVSAS (318 aa). Disulfide bonds link Cys-52–Cys-127, Cys-171–Cys-223, and Cys-270–Cys-315. Ig-like C2-type domains are found at residues 148–237 and 248–331; these read PPLP…QRIT and ASVR…VVVD. Asn-281 carries an N-linked (GlcNAc...) asparagine glycan. The helical transmembrane segment at 350-370 threads the bilayer; sequence VVVVGVIAALLFCLLVVVVVL. Topologically, residues 371 to 510 are cytoplasmic; the sequence is MSRYHRRKAQ…IYINGRGHLV (140 aa). Residues 400-412 show a composition bias toward basic and acidic residues; it reads RLHSHHSDPRNQP. A disordered region spans residues 400–475; sequence RLHSHHSDPR…GRAEEEEDRD (76 aa).

Belongs to the nectin family. In terms of assembly, self-associates. Interacts via its Ig-like V-type domain with NECTIN1 Ig-like V-type domain. Interacts via its C-terminus with AFDN. Interacts with TIGIT.

The protein localises to the cell membrane. It localises to the cell junction. Its subcellular location is the adherens junction. Functionally, seems to be involved in cell adhesion through trans-homophilic and -heterophilic interactions, the latter including specifically interactions with NECTIN1. Plays a role in the senescence-associated cell size enlargement via SFK/PI3K/Rac1 and thus promotes senescent cell survival. Also participates in the innate immune response by acting as a ligand for the receptor TIGIT to inhibit NK-cell activity. The sequence is that of Nectin-4 from Bos taurus (Bovine).